The primary structure comprises 1246 residues: Zinc finger protein 687a (1246 aa).

Basic and acidic residues predominate over residues 24-47 (KEAIQSDTHGNHNEHSSVVGKERS). Positions 24–387 (KEAIQSDTHG…PTLVESASDA (364 aa)) are disordered. 2 stretches are compositionally biased toward polar residues: residues 88-111 (GEFSSADESQKSPQKGPSKDSSVP) and 163-195 (AFTNHPASTFQSLPLSNHPSVSSHLISPNFSSK). Residues 287 to 301 (SSTNPTSLTSTNNLP) are compositionally biased toward low complexity. Basic and acidic residues predominate over residues 302–317 (VEEKDLEHIIEERDSP). Residues 326–338 (QSRTSLPSNSQGA) show a composition bias toward polar residues. 2 stretches are compositionally biased toward basic and acidic residues: residues 341-350 (SKQRITREEA) and 360-375 (MQEKVDYGAEATEGKS). The C2H2-type 1 zinc-finger motif lies at 587 to 619 (YRCLECGDAFALERSLARHYDRRSMRIEVTCNH). The C2H2-type 2; degenerate zinc finger occupies 696 to 719 (HSCPECWSTFKGKQELVAHFQEVE). C2H2-type zinc fingers lie at residues 817–840 (HKCPSCPMAFKSSSGAESHCASQH), 854–876 (YKCVMCRTVFTQKSLLSVHIDTH), and 885–908 (FKCPDCNKLFTQRTSLLEHVKDTH). The interval 907–953 (THRETSNHDGTSTQNSLVKMESSDGEEWGRDEEEDKGKVSDANSAVP) is disordered. Residues 914-923 (HDGTSTQNSL) show a composition bias toward polar residues. Positions 929–940 (SDGEEWGRDEEE) are enriched in acidic residues. 2 consecutive C2H2-type zinc fingers follow at residues 958–981 (WSCSQCQTHYTDKENYISHMTEQH) and 988–1011 (FPCTLCEGSFSSSSSLRRHIRVKH). The C2H2-type 8; degenerate zinc-finger motif lies at 1018–1044 (FYCQLCTGEKRSFSSKLILEKHIQAQH). Residues 1045–1093 (AGERGTATQSQAVPQFTDGADSSSEHDAGVLGGSSVEPESRLAESTLTR) are disordered. 2 C2H2-type zinc fingers span residues 1137–1160 (AQCQQCGACFASSSSLSRHLFISH) and 1210–1232 (HICKVCGRYFSKPADLNTHFRTH).

The protein belongs to the krueppel C2H2-type zinc-finger protein family. Widely expressed with highest levels in kidney, spleen and ovary.

It localises to the nucleus. Functionally, may be involved in transcriptional regulation. The polypeptide is Zinc finger protein 687a (znf687a) (Danio rerio (Zebrafish)).